The chain runs to 239 residues: Putative GEM-like protein 3 (239 aa).

The disordered stretch occupies residues 29-68; it reads HWNPELVSESPAPDEKALSSSSAARSNPYVARAPTETSDA. A GRAM domain is found at 128-191; that stretch reads KIFRQTFETV…HQLKSVNPSI (64 aa).

It belongs to the GEM family.

This is Putative GEM-like protein 3 from Arabidopsis thaliana (Mouse-ear cress).